The primary structure comprises 357 residues: Dynein axonemal assembly factor 10 (357 aa).

6 WD repeats span residues 63–105 (EKAK…VPVY), 115–154 (NTID…DPVA), 162–205 (ENKR…LRWE), 207–249 (NIKN…PTKG), 257–297 (AHKS…QRSK), and 319–357 (LSTQ…LHKI).

In terms of assembly, component of the PAQosome complex which is responsible for the biogenesis of several protein complexes and which consists of R2TP complex members RUVBL1, RUVBL2, RPAP3 and PIH1D1, URI complex members PFDN2, PFDN6, PDRG1, UXT and URI1 as well as ASDURF, POLR2E and DNAAF10/WDR92. Interacts with PIH1D1; the interaction associates DNAAF10 with the R2TP complex. Interacts with several dynein axonemal assembly factors.

Its subcellular location is the dynein axonemal particle. In terms of biological role, key assembly factor specifically required for the stability of axonemal dynein heavy chains in cytoplasm. This is Dynein axonemal assembly factor 10 (DNAAF10) from Bos taurus (Bovine).